We begin with the raw amino-acid sequence, 61 residues long: Small ribosomal subunit protein uS14C (61 aa).

C24, C27, C40, and C43 together coordinate Zn(2+).

It belongs to the universal ribosomal protein uS14 family. Zinc-binding uS14 subfamily. In terms of assembly, part of the 30S ribosomal subunit. Contacts proteins S3 and S10. Zn(2+) serves as cofactor.

In terms of biological role, binds 16S rRNA, required for the assembly of 30S particles and may also be responsible for determining the conformation of the 16S rRNA at the A site. The protein is Small ribosomal subunit protein uS14C of Bacillus licheniformis (strain ATCC 14580 / DSM 13 / JCM 2505 / CCUG 7422 / NBRC 12200 / NCIMB 9375 / NCTC 10341 / NRRL NRS-1264 / Gibson 46).